Reading from the N-terminus, the 309-residue chain is Lactamase-like protein aptB (309 aa).

Zn(2+)-binding residues include His97, His99, Asp101, and His102. Asp101 functions as the Proton donor/acceptor in the catalytic mechanism.

The protein belongs to the metallo-beta-lactamase superfamily. Zn(2+) is required as a cofactor.

The enzyme catalyses 2,3,6,8,9-pentahydroxy-1-oxo-3-(2-oxopropyl)-1,2,3,4-tetrahydroanthracene-2-carboxyl-[ACP] + H2O = 2,3,6,8,9-pentahydroxy-1-oxo-3-(2-oxopropyl)-1,2,3,4-tetrahydroanthracene-2-carboxylate + holo-[ACP] + H(+). It participates in secondary metabolite biosynthesis. Its function is as follows. Lactamase-like protein; part of the gene cluster that mediates the biosynthesis of asperthecin, an anthraquinone pigment. Polyketide synthase (PKS) aptA catalyzes the formation of the aromatic polyketide from acetyl coenzyme A and seven malonyl coenzyme A molecules. Polyketide is subsequently hydrolyzed by the action of aptB into endocrocin-9-anthrone. Endocrocin-9-anthrone is then oxidized into endocrocin by aptC. Endocrocin is likely to decarboxylate spontaneously to form emodin which explains why there is no decarboxylase in the asperthecin biosynthesis cluster. Finally, aptC or another endogenous oxygenase catalyzes additional oxidation steps to form asperthecin. The chain is Lactamase-like protein aptB from Emericella nidulans (strain FGSC A4 / ATCC 38163 / CBS 112.46 / NRRL 194 / M139) (Aspergillus nidulans).